The sequence spans 196 residues: DnaA initiator-associating protein DiaA (196 aa).

Residues M34–D196 enclose the SIS domain.

It belongs to the SIS family. DiaA subfamily. Homotetramer; dimer of dimers.

Its function is as follows. Required for the timely initiation of chromosomal replication via direct interactions with the DnaA initiator protein. In Photorhabdus laumondii subsp. laumondii (strain DSM 15139 / CIP 105565 / TT01) (Photorhabdus luminescens subsp. laumondii), this protein is DnaA initiator-associating protein DiaA.